The following is a 102-amino-acid chain: Protamine-2 (102 aa).

The segment at 1–102 is disordered; it reads MVRYRMRSLS…RTRRRRCRRH (102 aa). Residues Ser8 and Ser10 each carry the phosphoserine modification. Positions 8–17 are enriched in basic and acidic residues; the sequence is SLSERSHEVH. The segment covering 18–29 has biased composition (low complexity); it reads GQQVHGQDQGHN. The span at 39 to 48 shows a compositional bias: basic and acidic residues; the sequence is EHVEVYERTH. Residues 49–102 show a composition bias toward basic residues; the sequence is GHSHYRRRHCSRRRLHRIHRRRHRSCRRRRRRSCRHRRRHRRGCRTRRRRCRRH.

It belongs to the protamine P2 family. In terms of assembly, interacts with TDRP. Post-translationally, proteolytic processing into mature chains is required for histone eviction during spermatogenesis. Transition proteins (TNP1 and TNP2) are required for processing. Testis.

Its subcellular location is the nucleus. It localises to the chromosome. Its function is as follows. Protamines substitute for histones in the chromatin of sperm during the haploid phase of spermatogenesis. They compact sperm DNA into a highly condensed, stable and inactive complex. The sequence is that of Protamine-2 (PRM2) from Macaca mulatta (Rhesus macaque).